We begin with the raw amino-acid sequence, 498 residues long: ATP synthase subunit beta, chloroplastic (498 aa).

172 to 179 contributes to the ATP binding site; the sequence is GGAGVGKT.

The protein belongs to the ATPase alpha/beta chains family. As to quaternary structure, F-type ATPases have 2 components, CF(1) - the catalytic core - and CF(0) - the membrane proton channel. CF(1) has five subunits: alpha(3), beta(3), gamma(1), delta(1), epsilon(1). CF(0) has four main subunits: a(1), b(1), b'(1) and c(9-12).

It localises to the plastid. Its subcellular location is the chloroplast thylakoid membrane. The enzyme catalyses ATP + H2O + 4 H(+)(in) = ADP + phosphate + 5 H(+)(out). Its function is as follows. Produces ATP from ADP in the presence of a proton gradient across the membrane. The catalytic sites are hosted primarily by the beta subunits. The chain is ATP synthase subunit beta, chloroplastic from Hyphaene coriacea (Ilala palm).